The chain runs to 513 residues: MGVYSRAVAFSVFVSFLLFFTAYSKRNDGTFRVGLKKLKLDPNNRLATRFGSKQEEALRSSLRSYNNNLGGDSGDADIVPLKNYLDAQYYGEIAIGTPPQKFTVIFDTGSSNLWVPSGKCFFSLSCYFHAKYKSSRSSTYKKSGKRAAIHYGSGSISGFFSYDAVTVGDLVVKDQEFIETTSEPGLTFLVAKFDGLLGLGFQEIAVGNATPVWYNMLKQGLIKRPVFSFWLNRDPKSEEGGEIVFGGVDPKHFRGEHTFVPVTQRGYWQFDMGEVLIAGESTGYCGSGCSAIADSGTSLLAGPTAVVAMINKAIGASGVVSQQCKTVVDQYGQTILDLLLAETQPKKICSQIGLCAYDGTHGVSMGIESVVDKENTRSSSGLRDAGCPACEMAVVWIQSQLRQNMTQERIVNYINEICERMPSPNGESAVDCSQLSKMPTVSFTIGGKVFDLAPEEYVLKIGEGPVAQCISGFTALDIPPPRGPLWILGDVFMGKYHTVFDFGNEQVGFAEAV.

The signal sequence occupies residues 1-24 (MGVYSRAVAFSVFVSFLLFFTAYS). Residues 25-71 (KRNDGTFRVGLKKLKLDPNNRLATRFGSKQEEALRSSLRSYNNNLGG) constitute a propeptide, activation peptide. Residues 89 to 510 (YYGEIAIGTP…DFGNEQVGFA (422 aa)) enclose the Peptidase A1 domain. Residue aspartate 107 is part of the active site. Cystine bridges form between cysteine 120/cysteine 126 and cysteine 285/cysteine 289. Aspartate 294 is an active-site residue. Residues 319–424 (VVSQQCKTVV…NEICERMPSP (106 aa)) enclose the Saposin B-type domain. Cystine bridges form between cysteine 324-cysteine 418, cysteine 349-cysteine 390, cysteine 355-cysteine 387, and cysteine 432-cysteine 469. N-linked (GlcNAc...) asparagine glycosylation occurs at asparagine 404.

It belongs to the peptidase A1 family. In terms of tissue distribution, expressed in seed pods and dry seeds.

The protein localises to the vacuole. Its function is as follows. Involved in the breakdown of propeptides of storage proteins in protein-storage vacuoles. This Arabidopsis thaliana (Mouse-ear cress) protein is Aspartic proteinase A2 (APA2).